The sequence spans 597 residues: Probable E3 ubiquitin-protein ligase ARI1 (597 aa).

Positions 119–333 (SQMSCDVCME…IAGHSCGRYQ (215 aa)) are TRIAD supradomain. The Zn(2+) site is built by cysteine 123, cysteine 126, cysteine 140, histidine 142, cysteine 145, cysteine 148, cysteine 167, cysteine 172, cysteine 214, cysteine 220, cysteine 236, cysteine 238, cysteine 243, cysteine 246, histidine 251, cysteine 256, cysteine 283, and cysteine 286. The segment at 123–172 (CDVCMEDLPGDHMTRMDCGHCFCNNCWTEHFTVQINEGQSKRIRCMAHQC) adopts an RING-type 1 zinc-finger fold. The segment at 194-256 (AKFDRYLLES…LCQAHSPCSC (63 aa)) adopts an IBR-type zinc-finger fold. The RING-type 2; atypical zinc-finger motif lies at 283-311 (CPKCYKPVEKNGGCNLVRCICGQCFCWLC). The active site involves cysteine 296. Zn(2+)-binding residues include cysteine 301, cysteine 303, cysteine 308, cysteine 311, histidine 319, and cysteine 329. Residues 536 to 575 (FQPLDSGTSGVTSRPEQASGSRSSEDTICSSSQKRPKKEG) form a disordered region. Over residues 540 to 568 (DSGTSGVTSRPEQASGSRSSEDTICSSSQ) the composition is skewed to polar residues.

It belongs to the RBR family. Ariadne subfamily. Zn(2+) is required as a cofactor. Ubiquitous.

It carries out the reaction [E2 ubiquitin-conjugating enzyme]-S-ubiquitinyl-L-cysteine + [acceptor protein]-L-lysine = [E2 ubiquitin-conjugating enzyme]-L-cysteine + [acceptor protein]-N(6)-ubiquitinyl-L-lysine.. It functions in the pathway protein modification; protein ubiquitination. Functionally, might act as an E3 ubiquitin-protein ligase, or as part of E3 complex, which accepts ubiquitin from specific E2 ubiquitin-conjugating enzymes and then transfers it to substrates. In Arabidopsis thaliana (Mouse-ear cress), this protein is Probable E3 ubiquitin-protein ligase ARI1 (ARI1).